The primary structure comprises 66 residues: Large ribosomal subunit protein bL33c (66 aa).

Belongs to the bacterial ribosomal protein bL33 family.

The protein localises to the plastid. Its subcellular location is the chloroplast. This is Large ribosomal subunit protein bL33c from Arabis hirsuta (Hairy rock-cress).